The primary structure comprises 314 residues: Carbamate kinase (314 aa).

This sequence belongs to the carbamate kinase family. As to quaternary structure, homodimer.

Its subcellular location is the cytoplasm. It catalyses the reaction hydrogencarbonate + NH4(+) + ATP = carbamoyl phosphate + ADP + H2O + H(+). This Pyrococcus horikoshii (strain ATCC 700860 / DSM 12428 / JCM 9974 / NBRC 100139 / OT-3) protein is Carbamate kinase (cpkA).